The primary structure comprises 471 residues: Pneumolysin (471 aa).

4 beta stranded membrane-spanning segments follow: residues 158–171 (MEQLKVKFGSDFEK), 178–187 (IDFNSVHSGE), 256–265 (SDEVEAAFEA), and 273–285 (APQTEWKQILDNT). Residues 427-437 (ECTGLAWEWWR) carry the Conserved undecapeptide motif. Residues 459 to 460 (TL) carry the Cholesterol binding motif.

The protein belongs to the cholesterol-dependent cytolysin family. Elongated monomers align along their lengths, indicating intersubunit contacts and suggesting the prepore structure. Modeling based on cryo-EM shows a homooligomeric pore complex containing 38-44 subunits; when inserted in the host membrane. The size of isolated pores is detergent-dependent; in amphipol A8-35 homogenous rings form with 42 subunits.

It localises to the secreted. The protein resides in the host cell membrane. Erythrocytes hemolysis is inhibited by cholesterol. Its function is as follows. A cholesterol-dependent toxin that causes cytolysis by forming pores in cholesterol-containing host membranes. After binding to target membranes, the protein undergoes a major conformation change, leading to its insertion in the host membrane and formation of an oligomeric pore complex. Cholesterol is required for binding to host membranes, membrane insertion and pore formation; cholesterol binding is mediated by a Thr-Leu pair in the C-terminus. Can be reversibly inactivated by oxidation. The chain is Pneumolysin (ply) from Streptococcus pneumoniae serotype 2 (strain D39 / NCTC 7466).